Reading from the N-terminus, the 433-residue chain is Arrestin domain-containing protein 1 (433 aa).

Disordered stretches follow at residues 296-322 (GLGL…AEAA) and 349-372 (LSSV…PLHP). Positions 301-312 (PGAPPLVVPSAP) are enriched in pro residues. 2 consecutive short sequence motifs (PPxY motif) follow at residues 402 to 405 (PPEY) and 415 to 418 (PPSY).

Belongs to the arrestin family. As to quaternary structure, interacts (via PPxY motifs) with ITCH (via WW domains); the interaction is direct and participates in the recruitment of the ubiquitin-protein ligase ITCH to the NOTCH1 receptor. Interacts with ARRB1 and ARRB2; the interaction is direct. Interacts with TSG101; may recruit TSG101 to the plasma membrane. Interacts (via PPxY motifs) with WWP2 (via WW domains); ubiquitinates ARRDC1. Interacts with SLC11A2; controls the incorporation of SLC11A2 into extracellular vesicles through an ubiquitination-dependent mechanism. Interacts with WWP1 (via WW domains). Interacts with NEDD4 (via WW domains). Interacts with PDCD6IP. Post-translationally, ubiquitinated. Ubiquitination by WWP2; promotes localization to extracellular microvesicles. Ubiquitinated by WWP1.

It is found in the cell membrane. In terms of biological role, functions as an adapter recruiting ubiquitin-protein ligases to their specific substrates. Through an ubiquitination-dependent mechanism plays for instance a role in the incorporation of SLC11A2 into extracellular vesicles. More generally, plays a role in the extracellular transport of proteins between cells through the release in the extracellular space of microvesicles. By participating in the ITCH-mediated ubiquitination and subsequent degradation of NOTCH1, negatively regulates the NOTCH signaling pathway. This chain is Arrestin domain-containing protein 1, found in Homo sapiens (Human).